The sequence spans 232 residues: Ubiquinone biosynthesis O-methyltransferase (232 aa).

Positions 36, 55, 76, and 120 each coordinate S-adenosyl-L-methionine.

It belongs to the methyltransferase superfamily. UbiG/COQ3 family.

The catalysed reaction is a 3-demethylubiquinol + S-adenosyl-L-methionine = a ubiquinol + S-adenosyl-L-homocysteine + H(+). It catalyses the reaction a 3-(all-trans-polyprenyl)benzene-1,2-diol + S-adenosyl-L-methionine = a 2-methoxy-6-(all-trans-polyprenyl)phenol + S-adenosyl-L-homocysteine + H(+). It functions in the pathway cofactor biosynthesis; ubiquinone biosynthesis. In terms of biological role, O-methyltransferase that catalyzes the 2 O-methylation steps in the ubiquinone biosynthetic pathway. The sequence is that of Ubiquinone biosynthesis O-methyltransferase from Burkholderia vietnamiensis (strain G4 / LMG 22486) (Burkholderia cepacia (strain R1808)).